A 464-amino-acid chain; its full sequence is Glutamate--tRNA ligase (464 aa).

Positions Pro-9–Gly-19 match the 'HIGH' region motif. The 'KMSKS' region signature appears at Lys-242 to Arg-246. Lys-245 lines the ATP pocket.

Belongs to the class-I aminoacyl-tRNA synthetase family. Glutamate--tRNA ligase type 1 subfamily. Monomer.

The protein localises to the cytoplasm. The catalysed reaction is tRNA(Glu) + L-glutamate + ATP = L-glutamyl-tRNA(Glu) + AMP + diphosphate. Catalyzes the attachment of glutamate to tRNA(Glu) in a two-step reaction: glutamate is first activated by ATP to form Glu-AMP and then transferred to the acceptor end of tRNA(Glu). The sequence is that of Glutamate--tRNA ligase from Neisseria meningitidis serogroup C / serotype 2a (strain ATCC 700532 / DSM 15464 / FAM18).